The following is a 205-amino-acid chain: MIGKLKGTIDEIGEDFVVLDVHGVGYVAYCSARTLAKLGSAGEAAVLFIETYVREDQLRLFGFLSALEREWFRLLQTVQGVGSKVALALLTTLTPGELANAIALQDKTSVARAPGVGPKVAVRIVTELKNKAPAFAGEMSASIGLKQELGEGVAAAPVSDAVSALTNLGYSRDQAANAVAAALKNGGEGGDSAKLIRLGLKELAR.

A domain I region spans residues 1 to 64; it reads MIGKLKGTID…EDQLRLFGFL (64 aa). Residues 65–143 are domain II; it reads SALEREWFRL…AFAGEMSASI (79 aa). Residues 144–153 form a flexible linker region; it reads GLKQELGEGV. A domain III region spans residues 153-205; it reads VAAAPVSDAVSALTNLGYSRDQAANAVAAALKNGGEGGDSAKLIRLGLKELAR.

The protein belongs to the RuvA family. Homotetramer. Forms an RuvA(8)-RuvB(12)-Holliday junction (HJ) complex. HJ DNA is sandwiched between 2 RuvA tetramers; dsDNA enters through RuvA and exits via RuvB. An RuvB hexamer assembles on each DNA strand where it exits the tetramer. Each RuvB hexamer is contacted by two RuvA subunits (via domain III) on 2 adjacent RuvB subunits; this complex drives branch migration. In the full resolvosome a probable DNA-RuvA(4)-RuvB(12)-RuvC(2) complex forms which resolves the HJ.

The protein resides in the cytoplasm. Its function is as follows. The RuvA-RuvB-RuvC complex processes Holliday junction (HJ) DNA during genetic recombination and DNA repair, while the RuvA-RuvB complex plays an important role in the rescue of blocked DNA replication forks via replication fork reversal (RFR). RuvA specifically binds to HJ cruciform DNA, conferring on it an open structure. The RuvB hexamer acts as an ATP-dependent pump, pulling dsDNA into and through the RuvAB complex. HJ branch migration allows RuvC to scan DNA until it finds its consensus sequence, where it cleaves and resolves the cruciform DNA. In Sinorhizobium fredii (strain NBRC 101917 / NGR234), this protein is Holliday junction branch migration complex subunit RuvA.